The chain runs to 330 residues: ATP-dependent (S)-NAD(P)H-hydrate dehydratase (330 aa).

The 292-residue stretch at 36-327 (VIPLVRNTIP…QEINSAFKKL (292 aa)) folds into the YjeF C-terminal domain. (6S)-NADPHX contacts are provided by residues glycine 136 and 189-195 (NFMEFTR). ATP is bound by residues 229–233 (KGEED) and 248–257 (GSGRRCGGQG). Residue aspartate 258 participates in (6S)-NADPHX binding.

It belongs to the NnrD/CARKD family. Requires Mg(2+) as cofactor.

It carries out the reaction (6S)-NADHX + ATP = ADP + phosphate + NADH + H(+). The catalysed reaction is (6S)-NADPHX + ATP = ADP + phosphate + NADPH + H(+). Catalyzes the dehydration of the S-form of NAD(P)HX at the expense of ATP, which is converted to ADP. Together with NAD(P)HX epimerase, which catalyzes the epimerization of the S- and R-forms, the enzyme allows the repair of both epimers of NAD(P)HX, a damaged form of NAD(P)H that is a result of enzymatic or heat-dependent hydration. This chain is ATP-dependent (S)-NAD(P)H-hydrate dehydratase, found in Danio rerio (Zebrafish).